The primary structure comprises 900 residues: MASGLPRFLQALPAEHGPEPLRTRVQEPDLQQWGLTGIRLRSYQLEGVNWLVQCFHCQNGCILGDEMGLGKTCQTIALLIYLVGRLNDEGPFLVLCPLSVLSNWKEEMERFAPGLSCVTYTGDKEERARLQQDLRQESGFHVLLTTYEICLKDASFLKSFSWSVLAVDEAHRLKNQSSLLHRTLSEFSAVFRLLLTGTPIQNSLRELYSLLCVVEPDLFCREQVEDFVQRYQDIEKESKSASELHRLLQPFLLRRVKAQVATELPKKTEVVVYHGMSALQKKYYKAILMKDLDAFENETAKKVKLQNILTQLRKCVDHPYLFDGVEPEPFEVGEHLIEASGKLHLLDRLLAFLYSGGHRVLLFSQMTHMLDILQDYMDYRGYSYERVDGSVRGEERHLAIKNFGNQPIFVFLLSTRAGGVGMNLTAADTVIFVDSDFNPQNDLQAAARAHRIGQNKSVKVIRLIGRDTVEEIVYRKAASKLQLTNMVIEGGHFTPGAQKPSAEADFQLSEILKFGLDKLLSSEGSSMEDIDLKSILGETKDGQWTPDALPAAAAAGGGSLEPEEGSELESRSYENHMYLFEGRDYSKEPSKEDRKSFEQLVNLQKTLLEKTSHGGRTLRNKGSVLIPGLAEGPIKRKKILSPEELEDRRKKRQEAAAKRKRLMEEKRKEKEEAEHRKKMAWWESNGYQSFCLSSEDSELEDLEGGDESSAELAYEDLDSTSINYVSGDVTHPQAGEEDAVIVHCVDDSGRWGRGGLFTALEVRSAEPRKIYELAGKMEDLSLGDVLLFPIDDKESRDKGQDLLALVVAQHRDRTNVLSGIKMAALEEGLKKIFLAAKKKKASVHLPRIGHATKGFNWYGTERLIRKHLATRGIPTYIYYFPRSKARHSQPASSSSAPLVP.

The region spanning 52 to 217 is the Helicase ATP-binding domain; sequence VQCFHCQNGC…YSLLCVVEPD (166 aa). Position 65-72 (65-72) interacts with ATP; sequence DEMGLGKT. The DEAH box motif lies at 168-171; it reads DEAH. The Helicase C-terminal domain maps to 345–507; the sequence is LLDRLLAFLY…QKPSAEADFQ (163 aa). Phosphoserine is present on S534. The interval 546–569 is disordered; the sequence is PDALPAAAAAGGGSLEPEEGSELE. A regulatory linker segment (RLS) region spans residues 606-640; that stretch reads TLLEKTSHGGRTLRNKGSVLIPGLAEGPIKRKKIL. Phosphoserine occurs at positions 612, 623, and 641. Positions 620 to 678 are required for ATPase activity; that stretch reads NKGSVLIPGLAEGPIKRKKILSPEELEDRRKKRQEAAAKRKRLMEEKRKEKEEAEHRKK. The tract at residues 641-673 is disordered; that stretch reads SPEELEDRRKKRQEAAAKRKRLMEEKRKEKEEA. A coiled-coil region spans residues 643-680; that stretch reads EELEDRRKKRQEAAAKRKRLMEEKRKEKEEAEHRKKMA. Positions 653-673 are enriched in basic and acidic residues; that stretch reads QEAAAKRKRLMEEKRKEKEEA. The region spanning 709–900 is the Macro domain; sequence SAELAYEDLD…ASSSSAPLVP (192 aa). The residue at position 894 (S894) is a Phosphoserine.

Belongs to the SNF2/RAD54 helicase family. Interacts with nucleosomes; interacts with the acidic patch of histones. Interacts (via macro domain) with PARP1; interacts only when PARP1 is poly-ADP-ribosylated (PARylated). Interacts with CIAO1.

The protein localises to the nucleus. It localises to the chromosome. The enzyme catalyses ATP + H2O = ADP + phosphate + H(+). Its activity is regulated as follows. Adopts an inactive conformation in absence of DNA damage. Binding to poly-ADP-ribosylated histones activates the ATP-dependent chromatin remodeler activity. Functionally, ATP-dependent chromatin remodeler that mediates chromatin-remodeling following DNA damage. Recruited to DNA damage sites through interaction with poly-ADP-ribose: specifically recognizes and binds histones that are poly-ADP-ribosylated on serine residues in response to DNA damage. Poly-ADP-ribose-binding activates the ATP-dependent chromatin remodeler activity, thereby regulating chromatin during DNA repair. Catalyzes nucleosome sliding away from DNA breaks in an ATP-dependent manner. Chromatin remodeling activity promotes PARP2 removal from chromatin. This chain is Chromodomain-helicase-DNA-binding protein 1-like (Chd1l), found in Mus musculus (Mouse).